A 174-amino-acid polypeptide reads, in one-letter code: MLDKLRSRIVHLGPSLLSVPVKLTPFALKRQVLEQVLSWQFRQALDDGELEFLEGRWLSIHVRDIDLQWFTSVVNGKLVVSQNAQADVSFSADASDLLMIAARKQDPDTLFFQRRLVIEGDTELGLYVKNLMDAIELEQMPKALRMMLLQLADFVEAGMKTAPETKQTSVGEPC.

The SCP2 domain occupies 45 to 133; that stretch reads LDDGELEFLE…LGLYVKNLMD (89 aa).

Belongs to the UbiT family.

It participates in cofactor biosynthesis; ubiquinone biosynthesis. In terms of biological role, required for O(2)-independent ubiquinone (coenzyme Q) biosynthesis. Likely functions as an accessory factor. In Escherichia coli O157:H7, this protein is Ubiquinone biosynthesis accessory factor UbiT.